The following is a 350-amino-acid chain: Protein-glutamate methylesterase/protein-glutamine glutaminase (350 aa).

Residues 5–122 enclose the Response regulatory domain; that stretch reads RVLSVDDSAL…REGMLAYSEM (118 aa). D56 bears the 4-aspartylphosphate mark. Residues 152–338 enclose the CheB-type methylesterase domain; sequence LLSSEKLLVI…DLSQVVSQQM (187 aa). Catalysis depends on residues S164, H190, and D286.

It belongs to the CheB family. Phosphorylated by CheA. Phosphorylation of the N-terminal regulatory domain activates the methylesterase activity.

The protein localises to the cytoplasm. The catalysed reaction is [protein]-L-glutamate 5-O-methyl ester + H2O = L-glutamyl-[protein] + methanol + H(+). The enzyme catalyses L-glutaminyl-[protein] + H2O = L-glutamyl-[protein] + NH4(+). Its function is as follows. Involved in chemotaxis. Part of a chemotaxis signal transduction system that modulates chemotaxis in response to various stimuli. Catalyzes the demethylation of specific methylglutamate residues introduced into the chemoreceptors (methyl-accepting chemotaxis proteins or MCP) by CheR. Also mediates the irreversible deamidation of specific glutamine residues to glutamic acid. The chain is Protein-glutamate methylesterase/protein-glutamine glutaminase from Enterobacter cloacae.